Consider the following 81-residue polypeptide: Saposin-C (81 aa).

Residues 1-81 (ESVTCKACEY…CSELGLCMSG (81 aa)) enclose the Saposin B-type domain. Disulfide bonds link Cys5–Cys78, Cys8–Cys72, and Cys36–Cys47. Asn22 carries N-linked (GlcNAc...) asparagine glycosylation.

Functionally, saposin-A and saposin-C stimulate the hydrolysis of glucosylceramide by beta-glucosylceramidase (EC 3.2.1.45) and galactosylceramide by beta-galactosylceramidase (EC 3.2.1.46). Saposin-C apparently acts by combining with the enzyme and acidic lipid to form an activated complex, rather than by solubilizing the substrate. This Cavia porcellus (Guinea pig) protein is Saposin-C (PSAP).